Reading from the N-terminus, the 361-residue chain is Prostaglandin E2 receptor EP2 subtype (361 aa).

The segment covering 1-10 has biased composition (polar residues); it reads MGSISNNSGS. A disordered region spans residues 1–21; it reads MGSISNNSGSEDCESREWLPS. Over 1-23 the chain is Extracellular; it reads MGSISNNSGSEDCESREWLPSGE. N-linked (GlcNAc...) asparagine glycosylation occurs at Asn6. A helical membrane pass occupies residues 24-47; sequence SPAISSAMFSAGVLGNLIALALLA. Over 48–65 the chain is Cytoplasmic; sequence RRWRGDAGRRAGRGNSIS. The chain crosses the membrane as a helical span at residues 66-91; it reads LFHVLVTELVFTDLLGTCLISPVVLA. The Extracellular segment spans residues 92–111; the sequence is SYARNQTLMALEPERRACTY. The N-linked (GlcNAc...) asparagine glycan is linked to Asn96. Residues Cys109 and Cys187 are joined by a disulfide bond. Residues 112–132 traverse the membrane as a helical segment; that stretch reads FAFAMTFFSLATMLMLFAMAL. At 133-151 the chain is on the cytoplasmic side; it reads ERYLSIGRPYFYQRHVTRR. Residues 152 to 176 form a helical membrane-spanning segment; that stretch reads GGLAVLPTIYTVSLLFCSLPLLGYG. The Extracellular segment spans residues 177–198; the sequence is QYVQYCPGTWCFIRHGRTAYLQ. A helical transmembrane segment spans residues 199-223; sequence LYATLLLLLIVAVLACNFSVILNLI. At 224-262 the chain is on the cytoplasmic side; that stretch reads RMHRRSGRSRCGPSLGSCRDGSGTRRRGERVSVAEETDH. The tract at residues 230 to 253 is disordered; sequence GRSRCGPSLGSCRDGSGTRRRGER. Residues 263 to 286 form a helical membrane-spanning segment; sequence LILLAIMTITFAICSLPFTIFAYM. Asn287 carries an N-linked (GlcNAc...) asparagine glycan. Topologically, residues 287–299 are extracellular; sequence NETSSRREKWDLQ. Residues 300–323 form a helical membrane-spanning segment; it reads ALRFLSINSIIDPWVFAIFRPPVL. The Cytoplasmic segment spans residues 324–361; that stretch reads RLMRSVLCCRVSLRAQDATQTSCSIQSNASRLTFVDTS.

The protein belongs to the G-protein coupled receptor 1 family.

The protein localises to the cell membrane. Receptor for prostaglandin E2 (PGE2). The activity of this receptor is mediated by G(s) proteins that stimulate adenylate cyclase. The subsequent raise in intracellular cAMP is responsible for the relaxing effect of this receptor on smooth muscle. This is Prostaglandin E2 receptor EP2 subtype (PTGER2) from Canis lupus familiaris (Dog).